The primary structure comprises 363 residues: Ribonuclease D (363 aa).

Positions 5–168 (ITHPSELTDR…AIHDELTRRL (164 aa)) constitute a 3'-5' exonuclease domain. One can recognise an HRDC domain in the interval 208-288 (EPAAQRRLLR…NTPLPDEEHA (81 aa)).

This sequence belongs to the RNase D family. A divalent metal cation is required as a cofactor.

Its subcellular location is the cytoplasm. It carries out the reaction Exonucleolytic cleavage that removes extra residues from the 3'-terminus of tRNA to produce 5'-mononucleotides.. In terms of biological role, exonuclease involved in the 3' processing of various precursor tRNAs. Initiates hydrolysis at the 3'-terminus of an RNA molecule and releases 5'-mononucleotides. The chain is Ribonuclease D from Xanthomonas oryzae pv. oryzae (strain KACC10331 / KXO85).